The following is a 189-amino-acid chain: Elongation factor P (189 aa).

It belongs to the elongation factor P family.

It localises to the cytoplasm. It functions in the pathway protein biosynthesis; polypeptide chain elongation. Functionally, involved in peptide bond synthesis. Stimulates efficient translation and peptide-bond synthesis on native or reconstituted 70S ribosomes in vitro. Probably functions indirectly by altering the affinity of the ribosome for aminoacyl-tRNA, thus increasing their reactivity as acceptors for peptidyl transferase. In Ehrlichia ruminantium (strain Gardel), this protein is Elongation factor P.